Reading from the N-terminus, the 86-residue chain is Small ribosomal subunit protein bS18 (86 aa).

The protein belongs to the bacterial ribosomal protein bS18 family. In terms of assembly, part of the 30S ribosomal subunit. Forms a tight heterodimer with protein bS6.

Its function is as follows. Binds as a heterodimer with protein bS6 to the central domain of the 16S rRNA, where it helps stabilize the platform of the 30S subunit. The sequence is that of Small ribosomal subunit protein bS18 from Protochlamydia amoebophila (strain UWE25).